The chain runs to 41 residues: Conotoxin Ac4.2 (41 aa).

The propeptide occupies Phe1–Arg11. Pro13 is modified (4-hydroxyproline). Residues Thr18 and Thr20 are each glycosylated (O-linked (HexNAc...) threonine). 2 positions are modified to 4-hydroxyproline: Pro29 and Pro33. Residue Cys40 is modified to Cysteine amide.

This sequence belongs to the conotoxin A superfamily. In terms of processing, contains 3 disulfide bonds. Expressed by the venom duct.

Its subcellular location is the secreted. In terms of biological role, probable neurotoxin with ion channel inhibitor activity. This Conus achatinus (Little frog cone) protein is Conotoxin Ac4.2.